The primary structure comprises 257 residues: Probable amino-acid ABC transporter ATP-binding protein y4tH (257 aa).

The region spanning 6–251 (IVFDKVKKAY…PKEERTREFL (246 aa)) is the ABC transporter domain. Residue 38-45 (GPSGSGKS) participates in ATP binding.

This sequence belongs to the ABC transporter superfamily.

The protein resides in the cell inner membrane. Probably part of a binding-protein-dependent transport system y4tEFGH for an amino acid. Probably responsible for energy coupling to the transport system. The sequence is that of Probable amino-acid ABC transporter ATP-binding protein y4tH from Sinorhizobium fredii (strain NBRC 101917 / NGR234).